Here is a 121-residue protein sequence, read N- to C-terminus: Chorion class CA protein ERA.4 (121 aa).

An N-terminal signal peptide occupies residues 1–23 (MSSSFFCFFLFCFQTCLIQNVYS). Positions 24-57 (QCLGRVGPGGPPLGPYGGPLGGPGYGPVGYGGCG) are left arm. The central domain stretch occupies residues 58–105 (GYGGSGIGNVAVAGELPVAGSAAVLGQVPVIGAVEFAGPACAVGSVSI). The right arm stretch occupies residues 106–121 (SGACGPTCGCGGSPYY).

This sequence belongs to the chorion protein family.

Functionally, this protein is one of many from the eggshell of the silk moth. The chain is Chorion class CA protein ERA.4 (ERA.4) from Bombyx mori (Silk moth).